Consider the following 133-residue polypeptide: Small ribosomal subunit protein uS8 (133 aa).

It belongs to the universal ribosomal protein uS8 family. As to quaternary structure, part of the 30S ribosomal subunit. Contacts proteins S5 and S12.

Functionally, one of the primary rRNA binding proteins, it binds directly to 16S rRNA central domain where it helps coordinate assembly of the platform of the 30S subunit. The sequence is that of Small ribosomal subunit protein uS8 from Trichormus variabilis (strain ATCC 29413 / PCC 7937) (Anabaena variabilis).